The following is a 103-amino-acid chain: Large ribosomal subunit protein bL21 (103 aa).

The protein belongs to the bacterial ribosomal protein bL21 family. In terms of assembly, part of the 50S ribosomal subunit. Contacts protein L20.

In terms of biological role, this protein binds to 23S rRNA in the presence of protein L20. In Polaromonas sp. (strain JS666 / ATCC BAA-500), this protein is Large ribosomal subunit protein bL21.